Here is a 601-residue protein sequence, read N- to C-terminus: DNA ligase (601 aa).

Aspartate 258 provides a ligand contact to ATP. Lysine 260 serves as the catalytic N6-AMP-lysine intermediate. The ATP site is built by arginine 265, arginine 280, glutamate 310, phenylalanine 350, arginine 427, and lysine 433.

Belongs to the ATP-dependent DNA ligase family. Mg(2+) is required as a cofactor. Ca(2+) serves as cofactor. Requires Mn(2+) as cofactor.

The enzyme catalyses ATP + (deoxyribonucleotide)n-3'-hydroxyl + 5'-phospho-(deoxyribonucleotide)m = (deoxyribonucleotide)n+m + AMP + diphosphate.. Functionally, DNA ligase that seals nicks in double-stranded DNA during DNA replication, DNA recombination and DNA repair. Also has low activity with dATP. Inactive with NAD(+), CTP, GTP, UTP, dCTP, dGTP or dTTP. The sequence is that of DNA ligase from Saccharolobus shibatae (strain ATCC 51178 / DSM 5389 / JCM 8931 / NBRC 15437 / B12) (Sulfolobus shibatae).